The primary structure comprises 95 residues: Blastocyst protein 4 (95 aa).

Residues 1–20 (MGAVFAIIGGFALDSPILRL) form the signal peptide.

The sequence is that of Blastocyst protein 4 from Oryctolagus cuniculus (Rabbit).